Consider the following 92-residue polypeptide: Acylphosphatase (92 aa).

Residues 5-92 (CIAAYVYGVV…ADFQGFSIRY (88 aa)) form the Acylphosphatase-like domain. Residues Arg20 and Asn38 contribute to the active site.

Belongs to the acylphosphatase family.

It catalyses the reaction an acyl phosphate + H2O = a carboxylate + phosphate + H(+). The polypeptide is Acylphosphatase (acyP) (Serratia proteamaculans (strain 568)).